A 954-amino-acid chain; its full sequence is Valine--tRNA ligase (954 aa).

The 'HIGH' region signature appears at 48 to 58 (PNVTGSLHMGH). Positions 560-564 (KMSKS) match the 'KMSKS' region motif. ATP is bound at residue Lys563. Residues 883–953 (AGFINKEAEL…IQEQYKAIEA (71 aa)) adopt a coiled-coil conformation.

Belongs to the class-I aminoacyl-tRNA synthetase family. ValS type 1 subfamily. In terms of assembly, monomer.

The protein localises to the cytoplasm. The catalysed reaction is tRNA(Val) + L-valine + ATP = L-valyl-tRNA(Val) + AMP + diphosphate. Its function is as follows. Catalyzes the attachment of valine to tRNA(Val). As ValRS can inadvertently accommodate and process structurally similar amino acids such as threonine, to avoid such errors, it has a 'posttransfer' editing activity that hydrolyzes mischarged Thr-tRNA(Val) in a tRNA-dependent manner. This Haemophilus influenzae (strain PittEE) protein is Valine--tRNA ligase.